The primary structure comprises 245 residues: 2,3-bisphosphoglycerate-dependent phosphoglycerate mutase (245 aa).

Residues 8-15 (RHGQSLWN), 21-22 (TG), R60, 87-90 (ERHY), K98, 114-115 (RR), and 183-184 (GN) each bind substrate. The Tele-phosphohistidine intermediate role is filled by H9. E87 (proton donor/acceptor) is an active-site residue.

It belongs to the phosphoglycerate mutase family. BPG-dependent PGAM subfamily.

It catalyses the reaction (2R)-2-phosphoglycerate = (2R)-3-phosphoglycerate. The protein operates within carbohydrate degradation; glycolysis; pyruvate from D-glyceraldehyde 3-phosphate: step 3/5. In terms of biological role, catalyzes the interconversion of 2-phosphoglycerate and 3-phosphoglycerate. This Bacillus thuringiensis (strain Al Hakam) protein is 2,3-bisphosphoglycerate-dependent phosphoglycerate mutase.